A 478-amino-acid polypeptide reads, in one-letter code: Sulfate adenylyltransferase subunit 1 (478 aa).

The tr-type G domain maps to 28–244 (KTMLRFLTCG…LESVDVVNAS (217 aa)). The G1 stretch occupies residues 37-44 (GSVDDGKS). Position 37-44 (37-44 (GSVDDGKS)) interacts with GTP. The interval 95–99 (GITID) is G2. Residues 116-119 (DTPG) form a G3 region. GTP is bound by residues 116 to 120 (DTPGH) and 171 to 174 (NKMD). The tract at residues 171–174 (NKMD) is G4. The G5 stretch occupies residues 209-211 (SAL).

This sequence belongs to the TRAFAC class translation factor GTPase superfamily. Classic translation factor GTPase family. CysN/NodQ subfamily. As to quaternary structure, heterodimer composed of CysD, the smaller subunit, and CysN.

It catalyses the reaction sulfate + ATP + H(+) = adenosine 5'-phosphosulfate + diphosphate. It participates in sulfur metabolism; hydrogen sulfide biosynthesis; sulfite from sulfate: step 1/3. Functionally, with CysD forms the ATP sulfurylase (ATPS) that catalyzes the adenylation of sulfate producing adenosine 5'-phosphosulfate (APS) and diphosphate, the first enzymatic step in sulfur assimilation pathway. APS synthesis involves the formation of a high-energy phosphoric-sulfuric acid anhydride bond driven by GTP hydrolysis by CysN coupled to ATP hydrolysis by CysD. The polypeptide is Sulfate adenylyltransferase subunit 1 (Yersinia enterocolitica serotype O:8 / biotype 1B (strain NCTC 13174 / 8081)).